The sequence spans 101 residues: Co-chaperonin GroES (101 aa).

This sequence belongs to the GroES chaperonin family. In terms of assembly, heptamer of 7 subunits arranged in a ring. Interacts with the chaperonin GroEL.

It localises to the cytoplasm. Functionally, together with the chaperonin GroEL, plays an essential role in assisting protein folding. The GroEL-GroES system forms a nano-cage that allows encapsulation of the non-native substrate proteins and provides a physical environment optimized to promote and accelerate protein folding. GroES binds to the apical surface of the GroEL ring, thereby capping the opening of the GroEL channel. This is Co-chaperonin GroES from Thermus thermophilus (strain ATCC BAA-163 / DSM 7039 / HB27).